The primary structure comprises 94 residues: Small ribosomal subunit protein uS19 (94 aa).

The protein belongs to the universal ribosomal protein uS19 family.

Functionally, protein S19 forms a complex with S13 that binds strongly to the 16S ribosomal RNA. This chain is Small ribosomal subunit protein uS19, found in Caldicellulosiruptor saccharolyticus (strain ATCC 43494 / DSM 8903 / Tp8T 6331).